The following is a 169-amino-acid chain: uncharacterized protein (169 aa).

A helical membrane pass occupies residues 10–30; the sequence is YFVTILIIIIIILIVLLIVFL. The interval 98 to 123 is disordered; it reads QSKPINKNNQQTKNTPTPLDDRPDLS. The span at 100–115 shows a compositional bias: low complexity; it reads KPINKNNQQTKNTPTP.

It localises to the membrane. This is an uncharacterized protein from Acanthamoeba polyphaga (Amoeba).